Here is a 146-residue protein sequence, read N- to C-terminus: Ribosomal RNA large subunit methyltransferase H (146 aa).

S-adenosyl-L-methionine-binding positions include L68, G95, and 114-119 (LSSLTF).

This sequence belongs to the RNA methyltransferase RlmH family. Homodimer.

Its subcellular location is the cytoplasm. The enzyme catalyses pseudouridine(1915) in 23S rRNA + S-adenosyl-L-methionine = N(3)-methylpseudouridine(1915) in 23S rRNA + S-adenosyl-L-homocysteine + H(+). Specifically methylates the pseudouridine at position 1915 (m3Psi1915) in 23S rRNA. This is Ribosomal RNA large subunit methyltransferase H from Thermodesulfovibrio yellowstonii (strain ATCC 51303 / DSM 11347 / YP87).